We begin with the raw amino-acid sequence, 256 residues long: Adenylate kinase (256 aa).

45–50 (GAGKGT) contacts ATP. The tract at residues 67–96 (ATGDLLRQQVAMGTDLGKQAKKIMDQGALV) is NMP. AMP contacts are provided by residues Thr68, Arg73, 94–96 (ALV), 123–126 (GFPR), and Gln130. Residues 164-201 (GRLIHPGSGRSYHKIFSPPKQPMKDDITGEPLVQRSDD) form an LID region. ATP is bound by residues Arg165 and 174-175 (SY). Residues Arg198 and Arg209 each coordinate AMP. Gln237 contributes to the ATP binding site.

This sequence belongs to the adenylate kinase family. AK2 subfamily. In terms of assembly, monomer.

It is found in the cytoplasm. Its subcellular location is the cytosol. The protein localises to the mitochondrion intermembrane space. The enzyme catalyses AMP + ATP = 2 ADP. Catalyzes the reversible transfer of the terminal phosphate group between ATP and AMP. Plays an important role in cellular energy homeostasis and in adenine nucleotide metabolism. Adenylate kinase activity is critical for regulation of the phosphate utilization and the AMP de novo biosynthesis pathways. This chain is Adenylate kinase, found in Malassezia globosa (strain ATCC MYA-4612 / CBS 7966) (Dandruff-associated fungus).